The chain runs to 351 residues: DNA polymerase IV (351 aa).

A UmuC domain is found at 4-185 (IIHVDMDCFF…LPLGKIPGVG (182 aa)). Mg(2+) is bound by residues Asp-8 and Asp-103. Glu-104 is a catalytic residue.

The protein belongs to the DNA polymerase type-Y family. Monomer. Mg(2+) serves as cofactor.

The protein resides in the cytoplasm. It carries out the reaction DNA(n) + a 2'-deoxyribonucleoside 5'-triphosphate = DNA(n+1) + diphosphate. Poorly processive, error-prone DNA polymerase involved in untargeted mutagenesis. Copies undamaged DNA at stalled replication forks, which arise in vivo from mismatched or misaligned primer ends. These misaligned primers can be extended by PolIV. Exhibits no 3'-5' exonuclease (proofreading) activity. May be involved in translesional synthesis, in conjunction with the beta clamp from PolIII. The chain is DNA polymerase IV from Cronobacter sakazakii (strain ATCC BAA-894) (Enterobacter sakazakii).